An 815-amino-acid polypeptide reads, in one-letter code: uncharacterized protein (815 aa).

A signal peptide spans 1–21 (MNIYRLSFVSCLVMAMPCAMA). A disulfide bridge connects residues cysteine 795 and cysteine 814.

It belongs to the fimbrial export usher family.

The protein localises to the cell outer membrane. Functionally, could be involved in the export and assembly of the putative YbgD fimbrial subunit across the outer membrane. This is an uncharacterized protein from Escherichia coli (strain K12).